Here is a 396-residue protein sequence, read N- to C-terminus: Histidine-rich glycoprotein (396 aa).

2 Cystatin domains span residues 1-102 (AVNP…SALT) and 103-169 (NMRA…RFSA). 6 cysteine pairs are disulfide-bonded: Cys-7–Cys-375, Cys-56–Cys-67, Cys-77–Cys-92, Cys-123–Cys-297, Cys-137–Cys-160, and Cys-212–Cys-242. Asn-70 carries N-linked (GlcNAc...) asparagine; partial glycosylation. 2 N-linked (GlcNAc...) asparagine glycosylation sites follow: Asn-91 and Asn-122. Positions 176–322 (RPFHSGEHEH…GPGKGHFRFH (147 aa)) are disordered. Basic and acidic residues predominate over residues 197 to 208 (GSKDHGHPHESY). The N-linked (GlcNAc...) asparagine glycan is linked to Asn-220. The span at 233–246 (LPFPPPGLRCPHPP) shows a compositional bias: pro residues. The segment covering 255–265 (PPHDHSSDEHH) has biased composition (basic and acidic residues). Basic residues predominate over residues 266 to 284 (PHGHHPHGHHPHGHHPHGH). Over residues 285–296 (HPPDNDFYDHGP) the composition is skewed to basic and acidic residues. Positions 304 to 322 (PPPRHSKERGPGKGHFRFH) are enriched in basic residues. Ser-309 is modified (phosphoserine).

Interacts (via the HRR domain) with TPM1; the interaction appears to contribute to the antiangiogenic properties of the HRR domain. Interacts with THBS1 (via the TSP type I repeats); the interaction blocks the antiangiogenic effect of THBS1 with CD36. Interacts with PLG (via its Kringle domains); the interaction tethers PLG to the cell surface and enhances its activation. Interacts with THBS2; the interaction blocks the antiangiogenic effect of THBS2 with CD36. Interacts with HPSE; the interaction is enhanced at acidic pH, partially inhibits binding of HPSE to cell surface receptors and modulates its enzymatic activity. Interacts (via the HRR domain) with TMP1; the interaction partially mediates the antiangiogenic properties of HRG. Interacts with kappa and lambda light chains of IgG molecules. Interacts with ATP5F1A; the interaction occurs on the surface of T-cells and alters their cell morphology in concert with CONA. Binds IgG molecules containing kappa and lambda light chains and inhibits the formation of insoluble immunoglobulin complexes. Interacts with F12; the interaction, which is enhanced in the presence of zinc ions and inhibited by heparin-binding to HRG, inhibits factor XII autoactivation and contact-initiated coagulation. Post-translationally, N-glycosylated. In terms of processing, proteolytic cleavage produces several HRG fragments which are mostly disulfide-linked and, therefore, not released. On platelet activation, may release a 33 kDa antiangiogenic peptide which encompasses the HRR.

It is found in the secreted. Its function is as follows. Plasma glycoprotein that binds a number of ligands such as heme, heparin, heparan sulfate, thrombospondin, plasminogen, and divalent metal ions. Inhibits rosette formation. Acts as an adapter protein and implicated in regulating many processes such as immune complex and pathogen clearance, cell adhesion, angiogenesis, coagulation and fibrinolysis. Mediates clearance of necrotic cells through enhancing the phagocytosis of necrotic cells in a heparan sulfate-dependent pathway. This process can be regulated by the presence of certain HRG ligands such as heparin and zinc ions. Binds to IgG subclasses of immunoglobins containing kappa and lambda light chains with different affinities regulating their clearance and inhibiting the formation of insoluble immune complexes. Tethers plasminogen to the cell surface. Binds T-cells and alters the cell morphology. Modulates angiogenesis by blocking the CD6-mediated antiangiongenic effect of thrombospondins, THBS1 and THBS2. The chain is Histidine-rich glycoprotein (HRG) from Bos taurus (Bovine).